We begin with the raw amino-acid sequence, 128 residues long: MANSRRVSRVSSLIKREVSQMLLHDIKDDRVGAGMVSVTEVDVSGDLQHATIFVSIYGSEQAQAETMEGLKSSTSFVRRELSHRMRLRRSPEVVFRQDHSLERGDRMVHLLNQIKDTIPEEEGITEEE.

This sequence belongs to the RbfA family. As to quaternary structure, monomer. Binds 30S ribosomal subunits, but not 50S ribosomal subunits or 70S ribosomes.

The protein resides in the cytoplasm. Functionally, one of several proteins that assist in the late maturation steps of the functional core of the 30S ribosomal subunit. Associates with free 30S ribosomal subunits (but not with 30S subunits that are part of 70S ribosomes or polysomes). Required for efficient processing of 16S rRNA. May interact with the 5'-terminal helix region of 16S rRNA. The sequence is that of Ribosome-binding factor A from Rippkaea orientalis (strain PCC 8801 / RF-1) (Cyanothece sp. (strain PCC 8801)).